We begin with the raw amino-acid sequence, 1112 residues long: Patronin (microtubule-binding protein) homolog (1112 aa).

Positions 165 to 286 constitute a Calponin-homology (CH) domain; the sequence is IDSVDALLFW…VNAFLADLFV (122 aa). Disordered regions lie at residues 324-358, 485-504, 542-566, and 788-834; these read AARS…SRMS, EGED…QPSV, MQQQ…PSQL, and NHSE…GSGE. Composition is skewed to polar residues over residues 345-358 and 489-504; these read SHSQ…SRMS and GTQS…QPSV. Low complexity predominate over residues 542–557; the sequence is MQQQMQQQQQQQAQAQ. Residues 802 to 816 show a composition bias toward basic and acidic residues; the sequence is QNDRDDLSTGRKSDD. A coiled-coil region spans residues 850-914; sequence ALIAKTMKRK…YKRKKLEKEL (65 aa). The segment at 916 to 965 is disordered; that stretch reads AELSARSTGRGHSQPPFIRTKSQMSEVTESSRQNTPRMRGQSSVEQRVSV. Polar residues predominate over residues 935–951; that stretch reads TKSQMSEVTESSRQNTP. Over residues 956 to 965 the composition is skewed to low complexity; sequence QSSVEQRVSV. Residues 972–1109 form the CKK domain; it reads THKLYAKTVT…RIPHSGTPAH (138 aa).

Belongs to the CAMSAP1 family. Interacts with dapk-1. In terms of tissue distribution, expressed in larval and adult epidermis, intestine and pharynx. Broadly expressed in the nervous system. Expressed in body wall muscle cells.

Its subcellular location is the cell projection. It localises to the axon. The protein resides in the dendrite. It is found in the cell membrane. The protein localises to the sarcolemma. Its subcellular location is the cytoplasm. It localises to the cytosol. The protein resides in the cytoskeleton. It is found in the perikaryon. Required for microtubule stability and anchorage by binding to the minus ends of microtubules. Acts redundantly with noca-1 to control circumferential microtubule assembly along the body which is necessary for larval development, viability, morphology and integrity of the epidermis. Promotes microtubule stability and polymerization in neurons. Involved in the maintenance of neurite morphology in ALM and PLM neurons. May play a role in synaptic protein localization in the PLM neuron. May act upstream of dlk-1 in neuronal regeneration. Plays a role in postembryonic epidermal tissue integrity and wound healing. In Caenorhabditis elegans, this protein is Patronin (microtubule-binding protein) homolog.